The primary structure comprises 538 residues: Inositol-3-phosphate synthase (538 aa).

NAD(+)-binding residues include Gly74, Gly75, Asn76, Asn77, Asp150, Ser186, Val187, Gln197, Asp198, Arg200, Thr247, Ala248, Asn249, Thr250, Gly298, Ser299, Asp323, Ser326, Asn357, Asn358, Asp359, Lys372, Gly412, Asp413, Asp441, and Ser442.

The protein belongs to the myo-inositol 1-phosphate synthase family. In terms of assembly, homotetramer. The cofactor is NAD(+).

It localises to the cytoplasm. It carries out the reaction D-glucose 6-phosphate = 1D-myo-inositol 3-phosphate. It participates in polyol metabolism; myo-inositol biosynthesis; myo-inositol from D-glucose 6-phosphate: step 1/2. Key enzyme in myo-inositol biosynthesis pathway that catalyzes the conversion of glucose 6-phosphate to 1-myo-inositol 1-phosphate in a NAD-dependent manner. Rate-limiting enzyme in the synthesis of all inositol-containing compounds. The sequence is that of Inositol-3-phosphate synthase (INO1) from Candida glabrata (strain ATCC 2001 / BCRC 20586 / JCM 3761 / NBRC 0622 / NRRL Y-65 / CBS 138) (Yeast).